Consider the following 206-residue polypeptide: Imidazole glycerol phosphate synthase subunit HisH (206 aa).

In terms of domain architecture, Glutamine amidotransferase type-1 spans 5–206 (SVVVLDYGSG…AVLRNWIERL (202 aa)). Catalysis depends on C83, which acts as the Nucleophile. Active-site residues include H187 and E189.

As to quaternary structure, heterodimer of HisH and HisF.

Its subcellular location is the cytoplasm. It catalyses the reaction 5-[(5-phospho-1-deoxy-D-ribulos-1-ylimino)methylamino]-1-(5-phospho-beta-D-ribosyl)imidazole-4-carboxamide + L-glutamine = D-erythro-1-(imidazol-4-yl)glycerol 3-phosphate + 5-amino-1-(5-phospho-beta-D-ribosyl)imidazole-4-carboxamide + L-glutamate + H(+). The enzyme catalyses L-glutamine + H2O = L-glutamate + NH4(+). Its pathway is amino-acid biosynthesis; L-histidine biosynthesis; L-histidine from 5-phospho-alpha-D-ribose 1-diphosphate: step 5/9. In terms of biological role, IGPS catalyzes the conversion of PRFAR and glutamine to IGP, AICAR and glutamate. The HisH subunit catalyzes the hydrolysis of glutamine to glutamate and ammonia as part of the synthesis of IGP and AICAR. The resulting ammonia molecule is channeled to the active site of HisF. The polypeptide is Imidazole glycerol phosphate synthase subunit HisH (Mycolicibacterium paratuberculosis (strain ATCC BAA-968 / K-10) (Mycobacterium paratuberculosis)).